The sequence spans 371 residues: Cytochrome b (371 aa).

4 helical membrane-spanning segments follow: residues 25-45 (FGSMLLTCLALQTLTGFFLAV), 69-90 (WMMQNLHAIGASMFFICIYIHI), 105-125 (WMSGITLLIILMATAFFGYVL), and 170-190 (FFALHFILPFAIISLSSLHVI). Heme b contacts are provided by His75 and His89. Heme b-binding residues include His174 and His188. Residue His193 participates in a ubiquinone binding. The next 4 membrane-spanning stretches (helical) occupy residues 218-238 (YKDLLLLTLMILSLLIIVSFF), 280-300 (LGGALALVMSIMILLTIPFTH), 312-332 (LSQLMFWTLVSTFITITWAAT), and 339-358 (FIIISQVTATLYFTFFISTP).

Belongs to the cytochrome b family. The cytochrome bc1 complex contains 3 respiratory subunits (MT-CYB, CYC1 and UQCRFS1), 2 core proteins (UQCRC1 and UQCRC2) and probably 6 low-molecular weight proteins. Heme b serves as cofactor.

Its subcellular location is the mitochondrion inner membrane. In terms of biological role, component of the ubiquinol-cytochrome c reductase complex (complex III or cytochrome b-c1 complex) that is part of the mitochondrial respiratory chain. The b-c1 complex mediates electron transfer from ubiquinol to cytochrome c. Contributes to the generation of a proton gradient across the mitochondrial membrane that is then used for ATP synthesis. The sequence is that of Cytochrome b (MT-CYB) from Python sebae (African rock python).